The sequence spans 142 residues: Transcription antitermination protein NusB (142 aa).

The protein belongs to the NusB family.

Its function is as follows. Involved in transcription antitermination. Required for transcription of ribosomal RNA (rRNA) genes. Binds specifically to the boxA antiterminator sequence of the ribosomal RNA (rrn) operons. The polypeptide is Transcription antitermination protein NusB (Roseiflexus sp. (strain RS-1)).